We begin with the raw amino-acid sequence, 579 residues long: DBIRD complex subunit ZNF326 (579 aa).

Positions 1 to 124 are mediates transcriptional activation; the sequence is MDFEDDYTHS…YRNSLDSFGG (124 aa). Phosphoserine occurs at positions 48, 56, 63, 69, 81, 82, 91, 106, 114, 118, 121, and 137. Residue Lys-140 forms a Glycyl lysine isopeptide (Lys-Gly) (interchain with G-Cter in SUMO2) linkage. The tract at residues 154–194 is disordered; sequence YSSYSSFSSPHMKPAPVGSRGRGTPAYPESTFGSRNYDAFG. At Arg-173 the chain carries Omega-N-methylarginine. Phosphoserine is present on Ser-212. Residue Arg-235 is modified to Omega-N-methylarginine. Positions 238 to 260 match the Bipartite nuclear localization signal motif; that stretch reads KRKMIQPFNKPGGTFIKKPKLAK. Lys-240 participates in a covalent cross-link: Glycyl lysine isopeptide (Lys-Gly) (interchain with G-Cter in SUMO2). N6-acetyllysine; alternate is present on Lys-247. Residue Lys-247 forms a Glycyl lysine isopeptide (Lys-Gly) (interchain with G-Cter in SUMO2); alternate linkage. Residues 248–302 are disordered; that stretch reads PGGTFIKKPKLAKPVEKMSLSKSPTKTDPKNEEEEKRRIEARREKQRRRREKNSE. Thr-251 bears the Phosphothreonine mark. Glycyl lysine isopeptide (Lys-Gly) (interchain with G-Cter in SUMO2) cross-links involve residues Lys-254 and Lys-264. Ser-270 is modified (phosphoserine). The segment covering 272 to 290 has biased composition (basic and acidic residues); that stretch reads TKTDPKNEEEEKRRIEARR. Residues 314-336 form a C2H2 AKAP95-type 1 zinc finger; it reads CSFCKFRTFEEKDIELHLESASH. A Glycyl lysine isopeptide (Lys-Gly) (interchain with G-Cter in SUMO2) cross-link involves residue Lys-401. The segment at 407 to 430 adopts a C2H2 AKAP95-type 2 zinc-finger fold; it reads CSACSVYIPALHSSVQQHLKSPDH. Residues Lys-459 and Lys-467 each participate in a glycyl lysine isopeptide (Lys-Gly) (interchain with G-Cter in SUMO2) cross-link. Residues 470-579 form a disordered region; sequence NPFEIQDHSQ…GFSVDQAEEN (110 aa). 3 stretches are compositionally biased toward acidic residues: residues 483-520, 529-541, and 549-565; these read IEGDEEEEEKIDEPVEEEEEEEEEEEEVGEVEEAEEVG, GDTEEGGDVEGEG, and GEGEGEGVGEVEEEEAK.

It belongs to the AKAP95 family. In terms of assembly, component of the DBIRD complex. Interacts with CCAR2; the interaction is direct.

It localises to the nucleus matrix. Core component of the DBIRD complex, a multiprotein complex that acts at the interface between core mRNP particles and RNA polymerase II (RNAPII) and integrates transcript elongation with the regulation of alternative splicing: the DBIRD complex affects local transcript elongation rates and alternative splicing of a large set of exons embedded in (A + T)-rich DNA regions. May play a role in neuronal differentiation and is able to bind DNA and activate expression in vitro. This Bos taurus (Bovine) protein is DBIRD complex subunit ZNF326 (ZNF326).